The following is a 454-amino-acid chain: Chromosomal replication initiator protein DnaA (454 aa).

Residues 1 to 74 (MFDLEKFWDS…IQSAYAYAGI (74 aa)) are domain I, interacts with DnaA modulators. The segment at 74 to 116 (IDIYPVFVVKNGPTPSSERMLEPQPQAKPEKARPQGREFTKDL) is domain II. Residues 88–112 (PSSERMLEPQPQAKPEKARPQGREF) are disordered. Positions 101–112 (KPEKARPQGREF) are enriched in basic and acidic residues. Positions 117 to 333 (RLNEKYTFEN…GALVKVQAQA (217 aa)) are domain III, AAA+ region. ATP-binding residues include G161, G163, K164, and T165. Residues 334-454 (TIQKQDINIG…VSDLRQMLER (121 aa)) form a domain IV, binds dsDNA region.

Belongs to the DnaA family. In terms of assembly, oligomerizes as a right-handed, spiral filament on DNA at oriC.

It localises to the cytoplasm. Functionally, plays an essential role in the initiation and regulation of chromosomal replication. ATP-DnaA binds to the origin of replication (oriC) to initiate formation of the DNA replication initiation complex once per cell cycle. Binds the DnaA box (a 9 base pair repeat at the origin) and separates the double-stranded (ds)DNA. Forms a right-handed helical filament on oriC DNA; dsDNA binds to the exterior of the filament while single-stranded (ss)DNA is stabiized in the filament's interior. The ATP-DnaA-oriC complex binds and stabilizes one strand of the AT-rich DNA unwinding element (DUE), permitting loading of DNA polymerase. After initiation quickly degrades to an ADP-DnaA complex that is not apt for DNA replication. Binds acidic phospholipids. The sequence is that of Chromosomal replication initiator protein DnaA from Lactobacillus delbrueckii subsp. bulgaricus (strain ATCC 11842 / DSM 20081 / BCRC 10696 / JCM 1002 / NBRC 13953 / NCIMB 11778 / NCTC 12712 / WDCM 00102 / Lb 14).